Consider the following 622-residue polypeptide: Low affinity potassium transport system protein Kup (622 aa).

Helical transmembrane passes span 9–29, 49–69, 103–123, 137–157, 165–185, 213–233, 247–267, 276–296, 337–357, 363–383, 396–416, and 419–439; these read LPAITLAAIGVVYGDIGTSPL, VFGFLSLIFWLLIFVVSIKYL, VIMGLIGGSFFYGEVVITPAI, PQLDTWIVPLSIIVLTLLFMI, VGKLFAPIMLTWFLILAGLGL, VSFIALGAVVLSITGGEALYA, WFTVVLPSLTLNYFGQGALLL, PFFLLAPDWALIPLLIIAALA, IYIPFVNWMLYVAVVIVIVSF, LAAAYGIAVTGTMVLTSILST, FVALILIAFLCVDIPLFTANL, and LLSGGWLPLSLGTVMFIVMTT.

Belongs to the HAK/KUP transporter (TC 2.A.72) family.

It is found in the cell inner membrane. It catalyses the reaction K(+)(in) + H(+)(in) = K(+)(out) + H(+)(out). Responsible for the low-affinity transport of potassium into the cell. Likely operates as a K(+):H(+) symporter. This Escherichia coli O157:H7 (strain EC4115 / EHEC) protein is Low affinity potassium transport system protein Kup.